The following is a 689-amino-acid chain: Elongation factor G (689 aa).

Positions 9 to 283 (AKFRNIGIMA…AIIEFMPSPL (275 aa)) constitute a tr-type G domain. Residues 18–25 (AHIDAGKT), 82–86 (DTPGH), and 136–139 (NKMD) each bind GTP.

It belongs to the TRAFAC class translation factor GTPase superfamily. Classic translation factor GTPase family. EF-G/EF-2 subfamily.

It is found in the cytoplasm. In terms of biological role, catalyzes the GTP-dependent ribosomal translocation step during translation elongation. During this step, the ribosome changes from the pre-translocational (PRE) to the post-translocational (POST) state as the newly formed A-site-bound peptidyl-tRNA and P-site-bound deacylated tRNA move to the P and E sites, respectively. Catalyzes the coordinated movement of the two tRNA molecules, the mRNA and conformational changes in the ribosome. This Clostridium botulinum (strain ATCC 19397 / Type A) protein is Elongation factor G.